We begin with the raw amino-acid sequence, 188 residues long: Peptidyl-tRNA hydrolase (188 aa).

TRNA is bound at residue Tyr-14. His-19 (proton acceptor) is an active-site residue. Positions 64, 66, and 112 each coordinate tRNA.

This sequence belongs to the PTH family. Monomer.

Its subcellular location is the cytoplasm. The enzyme catalyses an N-acyl-L-alpha-aminoacyl-tRNA + H2O = an N-acyl-L-amino acid + a tRNA + H(+). In terms of biological role, hydrolyzes ribosome-free peptidyl-tRNAs (with 1 or more amino acids incorporated), which drop off the ribosome during protein synthesis, or as a result of ribosome stalling. Its function is as follows. Catalyzes the release of premature peptidyl moieties from peptidyl-tRNA molecules trapped in stalled 50S ribosomal subunits, and thus maintains levels of free tRNAs and 50S ribosomes. The chain is Peptidyl-tRNA hydrolase from Bacillus licheniformis (strain ATCC 14580 / DSM 13 / JCM 2505 / CCUG 7422 / NBRC 12200 / NCIMB 9375 / NCTC 10341 / NRRL NRS-1264 / Gibson 46).